A 281-amino-acid chain; its full sequence is Lipoyl synthase (281 aa).

Residues Cys37, Cys42, Cys48, Cys63, Cys67, Cys70, and Ser274 each contribute to the [4Fe-4S] cluster site. Residues 49 to 263 (WSRGTATFMI…RQQAVNKGFK (215 aa)) form the Radical SAM core domain.

This sequence belongs to the radical SAM superfamily. Lipoyl synthase family. The cofactor is [4Fe-4S] cluster.

Its subcellular location is the cytoplasm. The catalysed reaction is [[Fe-S] cluster scaffold protein carrying a second [4Fe-4S](2+) cluster] + N(6)-octanoyl-L-lysyl-[protein] + 2 oxidized [2Fe-2S]-[ferredoxin] + 2 S-adenosyl-L-methionine + 4 H(+) = [[Fe-S] cluster scaffold protein] + N(6)-[(R)-dihydrolipoyl]-L-lysyl-[protein] + 4 Fe(3+) + 2 hydrogen sulfide + 2 5'-deoxyadenosine + 2 L-methionine + 2 reduced [2Fe-2S]-[ferredoxin]. It participates in protein modification; protein lipoylation via endogenous pathway; protein N(6)-(lipoyl)lysine from octanoyl-[acyl-carrier-protein]: step 2/2. Functionally, catalyzes the radical-mediated insertion of two sulfur atoms into the C-6 and C-8 positions of the octanoyl moiety bound to the lipoyl domains of lipoate-dependent enzymes, thereby converting the octanoylated domains into lipoylated derivatives. This Parabacteroides distasonis (strain ATCC 8503 / DSM 20701 / CIP 104284 / JCM 5825 / NCTC 11152) protein is Lipoyl synthase.